A 72-amino-acid chain; its full sequence is MSAIFNFQSLLIVILLLICTCAYLRSLVPNLLDKNKTGVLGIFWKCARIGERKSPYVAVCCVVMAFSILFMQ.

The first 26 residues, 1 to 26 (MSAIFNFQSLLIVILLLICTCAYLRS), serve as a signal peptide directing secretion. Over 27 to 53 (LVPNLLDKNKTGVLGIFWKCARIGERK) the chain is Extracellular. Asparagine 35 is a glycosylation site (N-linked (GlcNAc...) asparagine). Residues 54-71 (SPYVAVCCVVMAFSILFM) form a helical membrane-spanning segment. Position 72 (glutamine 72) is a topological domain, cytoplasmic.

It belongs to the KISH family.

The protein resides in the golgi apparatus membrane. Its function is as follows. Involved in the early part of the secretory pathway. The polypeptide is Protein kish-A (tmem167a) (Xenopus laevis (African clawed frog)).